Reading from the N-terminus, the 448-residue chain is Tubulin alpha-5 chain (448 aa).

The MREC motif motif lies at 1–4; that stretch reads MREC. Residue Gln11 coordinates GTP. Lys40 bears the N6-acetyllysine mark. Residues Glu71, Ser140, Gly144, Thr145, Thr179, Asn206, and Asn228 each coordinate GTP. Glu71 contributes to the Mg(2+) binding site. Residue Glu254 is part of the active site.

The protein belongs to the tubulin family. Dimer of alpha and beta chains. A typical microtubule is a hollow water-filled tube with an outer diameter of 25 nm and an inner diameter of 15 nM. Alpha-beta heterodimers associate head-to-tail to form protofilaments running lengthwise along the microtubule wall with the beta-tubulin subunit facing the microtubule plus end conferring a structural polarity. Microtubules usually have 13 protofilaments but different protofilament numbers can be found in some organisms and specialized cells. Mg(2+) is required as a cofactor. Some glutamate residues at the C-terminus are polyglycylated, resulting in polyglycine chains on the gamma-carboxyl group. Glycylation is mainly limited to tubulin incorporated into axonemes (cilia and flagella) whereas glutamylation is prevalent in neuronal cells, centrioles, axonemes, and the mitotic spindle. Both modifications can coexist on the same protein on adjacent residues, and lowering polyglycylation levels increases polyglutamylation, and reciprocally. The precise function of polyglycylation is still unclear. In terms of processing, some glutamate residues at the C-terminus are polyglutamylated, resulting in polyglutamate chains on the gamma-carboxyl group. Polyglutamylation plays a key role in microtubule severing by spastin (SPAST). SPAST preferentially recognizes and acts on microtubules decorated with short polyglutamate tails: severing activity by SPAST increases as the number of glutamates per tubulin rises from one to eight, but decreases beyond this glutamylation threshold. Post-translationally, acetylation of alpha chains at Lys-40 is located inside the microtubule lumen. This modification has been correlated with increased microtubule stability, intracellular transport and ciliary assembly.

Its subcellular location is the cytoplasm. It localises to the cytoskeleton. It catalyses the reaction GTP + H2O = GDP + phosphate + H(+). Its function is as follows. Tubulin is the major constituent of microtubules, a cylinder consisting of laterally associated linear protofilaments composed of alpha- and beta-tubulin heterodimers. Microtubules grow by the addition of GTP-tubulin dimers to the microtubule end, where a stabilizing cap forms. Below the cap, tubulin dimers are in GDP-bound state, owing to GTPase activity of alpha-tubulin. This is Tubulin alpha-5 chain from Gallus gallus (Chicken).